A 448-amino-acid polypeptide reads, in one-letter code: MNITFIGSGYVGLVSGIIMGYLGHNVTCLDNDEVKISKLNKQILPIYEAKLDEYLKQALEANRLKFTNIYNNELQNAEAIFITVGTPSKESGEADLKYVYDAIDKVSEHINKDCLIVIKSTVPPDSCSNIIAYLKSKGFSFNVASNPEFLREGSAVEDFLYPDRIVVGVNNKESEEILRKIYAPLIEQGAKFVVTDLVTSELIKYASNSFLATKIAFINEMADLCEKIGGNIEDLSKGVGLDQRIGQNFLNAGPGFGGSCFPKDILALNNLVENHHIDCKILKAVIKSNKQRPSNMVDKIATLLDGDLKGKNIAVLGLTYKAGTDDVRASPAIEIVKILLNKDVYVKAFDPIGLENAKKNLEHKNLLYLDSVAEACKSVDIIVIATEWLEFKELNWQGIYDLVKFPIVIDLRNIIDNEAMKKIGFRYYAVGSKLDVIPAKAGIHYKAR.

Residues asparagine 2 to methionine 19, valine 11, aspartate 30, lysine 35, threonine 121, and glutamate 152 each bind NAD(+). Residues glutamate 148–glutamate 152, lysine 204, asparagine 208, phenylalanine 249–glycine 253, and glycine 257 each bind substrate. Cysteine 260 serves as the catalytic Nucleophile. Lysine 263 serves as a coordination point for NAD(+). Lysine 321 serves as a coordination point for substrate. Arginine 328 contributes to the NAD(+) binding site.

This sequence belongs to the UDP-glucose/GDP-mannose dehydrogenase family.

It carries out the reaction UDP-alpha-D-glucose + 2 NAD(+) + H2O = UDP-alpha-D-glucuronate + 2 NADH + 3 H(+). It participates in nucleotide-sugar biosynthesis; UDP-alpha-D-glucuronate biosynthesis; UDP-alpha-D-glucuronate from UDP-alpha-D-glucose: step 1/1. The chain is UDP-glucose 6-dehydrogenase (udg) from Rickettsia felis (strain ATCC VR-1525 / URRWXCal2) (Rickettsia azadi).